The primary structure comprises 546 residues: Acyl-CoA ligase oryP (546 aa).

Residues 166-174 (TSGTTGAPK), 300-305 (QFWLNL), and Arg-403 contribute to the ATP site. Residues 412-414 (WDH) and 482-484 (LLR) contribute to the CoA site. Lys-499 is a binding site for ATP.

It belongs to the ATP-dependent AMP-binding enzyme family.

It participates in secondary metabolite biosynthesis. In terms of biological role, acyl-CoA ligase; part of the gene cluster that mediates the biosynthesis of oryzines, natural products with an unusual maleidride backbone. The two subunits of the fungal fatty acid synthase oryfasA and oryfasB probably form octenoic acid. This fatty acid is most likely activated by the acyl-CoA ligase oryP to give octenyl-CoA before the citrate synthase-like protein oryE catalyzes condensation with oxaloacetate to form tricarboxylic acid. The next steps of the pathways are conjectural, but a favorite possible route has been proposed, beginning with decarboxylation and concomitant dehydration by the decarboxylase oryM, followed by tautomerization, which may lead to the production of a diene intermediate. Reduction of this diene intermediate could give the known metabolite piliformic acid. On the pathway to oryzine B and oryzine A, however, hydroxylation of the diene by the alpha-ketoglutarate-dependent dioxygenase oryG and lactonisation by the lactonohydrolases oryH or oryL could give oryzine B directly. Finally, enoyl reduction by the dehydrogenase oryD would then convert oryzine B into oryzine A. The polypeptide is Acyl-CoA ligase oryP (Aspergillus oryzae (strain ATCC 42149 / RIB 40) (Yellow koji mold)).